The primary structure comprises 185 residues: Peptidyl-tRNA hydrolase (185 aa).

Tyrosine 14 is a binding site for tRNA. The active-site Proton acceptor is histidine 19. Residues tyrosine 64, asparagine 66, and asparagine 112 each coordinate tRNA.

It belongs to the PTH family. As to quaternary structure, monomer.

Its subcellular location is the cytoplasm. The catalysed reaction is an N-acyl-L-alpha-aminoacyl-tRNA + H2O = an N-acyl-L-amino acid + a tRNA + H(+). Hydrolyzes ribosome-free peptidyl-tRNAs (with 1 or more amino acids incorporated), which drop off the ribosome during protein synthesis, or as a result of ribosome stalling. In terms of biological role, catalyzes the release of premature peptidyl moieties from peptidyl-tRNA molecules trapped in stalled 50S ribosomal subunits, and thus maintains levels of free tRNAs and 50S ribosomes. This chain is Peptidyl-tRNA hydrolase, found in Exiguobacterium sibiricum (strain DSM 17290 / CCUG 55495 / CIP 109462 / JCM 13490 / 255-15).